Here is a 482-residue protein sequence, read N- to C-terminus: Immune evasion protein OPG047 (482 aa).

Residues 20–90 (KKFKTIIEAI…SYTGKVYIDS (71 aa)) enclose the BTB domain. The 98-residue stretch at 125–222 (CIECYMMGIE…SNYLSPRGIH (98 aa)) folds into the BACK domain. Kelch repeat units follow at residues 273-319 (VVYL…PANN), 320-363 (KLYV…SINN), 365-408 (IYVM…VFGR), 410-447 (LFLV…IVDN), and 448-482 (KLLL…GMEW).

It belongs to the orthopoxvirus OPG047 family.

Might have a role in the suppression of host immune response. This chain is Immune evasion protein OPG047 (OPG047), found in Cynomys gunnisoni (Gunnison's prairie dog).